We begin with the raw amino-acid sequence, 394 residues long: MAKAKFERIKPHVNVGTIGHVDHGKTTLTAAISHVLAKTYGGEAKDFSQIDNAPEERERGITINTSHIEYDTPSRHYAHVDCPGHADYVKNMITGAAQMDGAILVVASTDGPMPQTREHILLSRQVGVPYIIVFMNKCDMVDDEELLELVEMEVRELLSEYDFPGDDLPVIQGSALKALEGQPEWEAKIIELANALDSYIPEPQRDIDKPFLLPIEDVFSISGRGTVVTGRVERGIVKVGDEVEIVGVRTTTKTTCTGVEMFRKLLDEGRAGENCGVLLRGTKRDDVERGQVLAKPGSINPHTTFESEVYVLSKEEGGRHTPFFKGYRPQFYFRTTDVTGTIELPEGVEMVMPGDNIKMVVTLICPIAMDEGLRFAIREGGRTVGAGVVAKIIA.

One can recognise a tr-type G domain in the interval 10–204 (KPHVNVGTIG…ALDSYIPEPQ (195 aa)). The interval 19 to 26 (GHVDHGKT) is G1. 19-26 (GHVDHGKT) provides a ligand contact to GTP. Residue threonine 26 coordinates Mg(2+). Positions 60-64 (GITIN) are G2. The G3 stretch occupies residues 81-84 (DCPG). Residues 81 to 85 (DCPGH) and 136 to 139 (NKCD) contribute to the GTP site. The G4 stretch occupies residues 136 to 139 (NKCD). Positions 174-176 (SAL) are G5.

It belongs to the TRAFAC class translation factor GTPase superfamily. Classic translation factor GTPase family. EF-Tu/EF-1A subfamily. Monomer.

It is found in the cytoplasm. The enzyme catalyses GTP + H2O = GDP + phosphate + H(+). Its function is as follows. GTP hydrolase that promotes the GTP-dependent binding of aminoacyl-tRNA to the A-site of ribosomes during protein biosynthesis. The polypeptide is Elongation factor Tu (Shewanella baltica (strain OS185)).